The primary structure comprises 522 residues: Target of rapamycin complex 2 subunit MAPKAP1 (522 aa).

At A2 the chain carries N-acetylalanine. An interaction with MAP3K2 region spans residues 2-184 (AFLDNPTIIL…KKIDVYLPLH (183 aa)). Positions 2–267 (AFLDNPTIIL…GFSTLALVEK (266 aa)) are interaction with NBN. A disordered region spans residues 38–59 (LEKTHPPSVPGDSGSEVQGSSG). A Phosphothreonine modification is found at T86. Phosphoserine is present on residues S128, S186, S315, and S356. The 129-residue stretch at 139-267 (QSILSVRLEQ…GFSTLALVEK (129 aa)) folds into the CRIM domain. Residues 279–353 (LFVRINAAHG…QNAWEFCLVR (75 aa)) are SIN1-type RBD. One can recognise an SIN1-type PH domain in the interval 382–487 (HYKSFKVSMI…IVLKVNYILE (106 aa)). R393 is an a 1,2-diacyl-sn-glycero-3-phospho-(1D-myo-inositol-3,4,5-trisphosphate) binding site. The residue at position 398 (T398) is a Phosphothreonine. Residues K428 and K464 each contribute to the a 1,2-diacyl-sn-glycero-3-phospho-(1D-myo-inositol-3,4,5-trisphosphate) site. Positions 468–522 (FESDAATVSEIVLKVNYILESRASTARADYFAQKQRKLNRRTSFSFQKEKKSGQQ) are interaction with ATF2. S510 bears the Phosphoserine mark.

Belongs to the SIN1 family. Component of the mechanistic target of rapamycin complex 2 (mTORC2), consisting in two heterotretramers composed of MTOR, MLST8, RICTOR and MAPKAP1/SIN1. The mTORC2 core complex associates with PRR5/PROTOR1 and/or PRR5L/PROTOR2. Contrary to mTORC1, mTORC2 does not bind to and is not sensitive to FKBP12-rapamycin. Interacts with MAP3K2. Interacts with ATF2. Interacts with MAPK8. Interacts with GTP-bound HRAS and KRAS; inhibiting their activity. Interacts with IFNAR2. Phosphorylation at Ser-128 by PKC promotes relocalization to the perinuclear region, where the mTORC2 complex specifically mediates phosphorylation of SGK1. Phosphorylated at Thr-86 by AKT1 or RPS6KB1 in the presence of growth factors; the effect of this phosphorylation is however unclear. According to two studies, phosphorylation at Thr-86 by AKT1 is part of a positive feedback loop that increases mTORC2 activation. According to another study, phosphorylation at Thr-86 and Thr-398 by RPS6KB1 promotes dissociation from the mTORC2 complex, leading to inhibit mTORC2 signaling.

It is found in the cell membrane. The protein resides in the endoplasmic reticulum membrane. It localises to the early endosome membrane. The protein localises to the late endosome membrane. Its subcellular location is the lysosome membrane. It is found in the golgi apparatus membrane. The protein resides in the mitochondrion outer membrane. It localises to the cytoplasm. The protein localises to the perinuclear region. Its subcellular location is the nucleus. Its activity is regulated as follows. Phosphatidylinositol 3,4,5-trisphosphate (PI(3,4,5)P3) promotes MTOR activation by relieving MAPKAP1/SIN1-mediated inhibition of MTOR that takes place in absence of PI(3,4,5)P3. Component of the mechanistic target of rapamycin complex 2 (mTORC2), which transduces signals from growth factors to pathways involved in proliferation, cytoskeletal organization, lipogenesis and anabolic output. In response to growth factors, mTORC2 phosphorylates and activates AGC protein kinase family members, including AKT (AKT1, AKT2 and AKT3), PKC (PRKCA, PRKCB and PRKCE) and SGK1. In contrast to mTORC1, mTORC2 is nutrient-insensitive. Within the mTORC2 complex, MAPKAP1/SIN1 acts as a substrate adapter which recognizes and binds AGC protein kinase family members for phosphorylation by MTOR. mTORC2 plays a critical role in AKT1 activation by mediating phosphorylation of different sites depending on the context, such as 'Thr-450', 'Ser-473', 'Ser-477' or 'Thr-479', facilitating the phosphorylation of the activation loop of AKT1 on 'Thr-308' by PDPK1/PDK1 which is a prerequisite for full activation. mTORC2 catalyzes the phosphorylation of SGK1 at 'Ser-422' and of PRKCA on 'Ser-657'. The mTORC2 complex also phosphorylates various proteins involved in insulin signaling, such as FBXW8 and IGF2BP1. mTORC2 acts upstream of Rho GTPases to regulate the actin cytoskeleton, probably by activating one or more Rho-type guanine nucleotide exchange factors. mTORC2 promotes the serum-induced formation of stress-fibers or F-actin. MAPKAP1 inhibits MAP3K2 by preventing its dimerization and autophosphorylation. Inhibits HRAS and KRAS independently of mTORC2 complex. Enhances osmotic stress-induced phosphorylation of ATF2 and ATF2-mediated transcription. Involved in ciliogenesis, regulates cilia length through its interaction with CCDC28B independently of mTORC2 complex. This is Target of rapamycin complex 2 subunit MAPKAP1 from Rattus norvegicus (Rat).